The sequence spans 623 residues: V-type proton ATPase catalytic subunit A (623 aa).

252–259 (GAFGCGKT) contributes to the ATP binding site.

Belongs to the ATPase alpha/beta chains family. As to quaternary structure, V-ATPase is a heteromultimeric enzyme composed of a peripheral catalytic V1 complex (main components: subunits A, B, C, D, E, and F) attached to an integral membrane V0 proton pore complex (main component: the proteolipid protein).

It catalyses the reaction ATP + H2O + 4 H(+)(in) = ADP + phosphate + 5 H(+)(out). Catalytic subunit of the peripheral V1 complex of vacuolar ATPase. V-ATPase vacuolar ATPase is responsible for acidifying a variety of intracellular compartments in eukaryotic cells. The polypeptide is V-type proton ATPase catalytic subunit A (Brassica napus (Rape)).